Consider the following 656-residue polypeptide: MESPFSPVLPHGPDEDWESTLFAELGYFTDTDDVHFDAAHEAYENNFDHLNFDLDLMPWESDLWSPGSHFCSDMKAEPQPLSPASSSCSISSPRSTDSCSSTQHVPEELDLLSSSQSPLSLYGDSCNSPSSVEPLKEEKPVTGPGNKTEHGLTPKKKIQMSSKPSVQPKPLLLPAAPKTQTNASVPAKAIIIQTLPALMPLAKQQSIISIQPAPTKGQTVLLSQPTVVQLQSPAVLSSAQPVLAVTGGAAQLPNHVVNVLPAPVVSSPVNGKLSVTKPVLQSATRSMGSDIAVLRRQQRMIKNRESACQSRKKKKEYMLGLEARLKAALSENEQLKKENGSLKRQLDEVVSENQRLKVPSPKRRAVCVMIVLAFIMLNYGPMSMLEQESRRVKPSVSPANQRRHLLEFSAKEVKDTSDGDNQKDSYSYDHSVSNDKALMVLSEEPLLYMPPPPCQPLINTTESLRLNHELRGWVHRHEVERTKSRRMTNSQQKARILQGALEQGSNSQLMAVQYTETTSISRNSGSELQVYYASPGSYQGFFDAIRRRGDTFYVVSFRRDHLLLPATTHNKTTRPKMSIVLPAININDNVINGQDYEVMMQIDCQVMDTRILHIKSSSVPPYLRDHQRNQTSTFFGSPPTTTETTHVVSTIPESLQ.

The transcription activation stretch occupies residues 1-137 (MESPFSPVLP…SPSSVEPLKE (137 aa)). Over 1 to 377 (MESPFSPVLP…VMIVLAFIML (377 aa)) the chain is Cytoplasmic. K75 is covalently cross-linked (Glycyl lysine isopeptide (Lys-Gly) (interchain with G-Cter in SUMO2)). The interval 75–169 (KAEPQPLSPA…MSSKPSVQPK (95 aa)) is disordered. 2 stretches are compositionally biased toward low complexity: residues 78-101 (PQPLSPASSSCSISSPRSTDSCSS) and 111-121 (LLSSSQSPLSL). Residue K139 forms a Glycyl lysine isopeptide (Lys-Gly) (interchain with G-Cter in ubiquitin) linkage. The 64-residue stretch at 293-356 (VLRRQQRMIK…DEVVSENQRL (64 aa)) folds into the bZIP domain. The segment at 295–326 (RRQQRMIKNRESACQSRKKKKEYMLGLEARLK) is basic motif. The leucine-zipper stretch occupies residues 335–342 (LKKENGSL). A helical; Signal-anchor for type II membrane protein transmembrane segment spans residues 378 to 398 (NYGPMSMLEQESRRVKPSVSP). Positions 391-429 (RVKPSVSPANQRRHLLEFSAKEVKDTSDGDNQKDSYSYD) are disordered. Residues 399–656 (ANQRRHLLEF…VVSTIPESLQ (258 aa)) lie on the Lumenal side of the membrane. A compositionally biased stretch (basic and acidic residues) spans 404 to 427 (HLLEFSAKEVKDTSDGDNQKDSYS). An interaction with THBS4 region spans residues 455-575 (QPLINTTESL…ATTHNKTTRP (121 aa)). 3 N-linked (GlcNAc...) asparagine glycosylation sites follow: N459, N570, and N629. Residues 632–650 (STFFGSPPTTTETTHVVST) are compositionally biased toward low complexity. Residues 632-656 (STFFGSPPTTTETTHVVSTIPESLQ) are disordered.

Belongs to the bZIP family. ATF subfamily. In terms of assembly, interacts with XBP1 isoform 2; the interaction occurs in a ER stress-dependent manner. Interacts with LACC1. Interacts with THBS4 (via EGF-like 3; calcium-binding domain) which facilitates its processing, activation and nuclear translocation. Interacts (via lumenal domain) with THBS1. As to quaternary structure, homodimer and heterodimer with ATF6-beta. The dimer interacts with the nuclear transcription factor Y (NF-Y) trimer through direct binding to NF-Y subunit C (NF-YC). Also interacts with the transcription factors GTF2I, YY1 and SRF. Post-translationally, during unfolded protein response, a fragment of approximately 50 kDa containing the cytoplasmic transcription factor domain is released by proteolysis. The cleavage seems to be performed sequentially by site-1 (MBTPS1, S1P) and site-2 (MBTPS2, S2P) proteases. N-glycosylated; in its luminal domain. The glycosylation status may serve as a sensor for ER homeostasis, resulting in ATF6 activation to trigger the unfolded protein response (UPR). In terms of processing, ubiquitinated by RNF186 at Lys-139, which is required for pattern recognition receptor-induced unfolded protein response-associated outcomes.

The protein localises to the endoplasmic reticulum membrane. It localises to the golgi apparatus membrane. Its subcellular location is the nucleus. In terms of biological role, precursor of the transcription factor form (Processed cyclic AMP-dependent transcription factor ATF-6 alpha), which is embedded in the endoplasmic reticulum membrane. Endoplasmic reticulum stress promotes processing of this form, releasing the transcription factor form that translocates into the nucleus, where it activates transcription of genes involved in the unfolded protein response (UPR). Transcription factor that initiates the unfolded protein response (UPR) during endoplasmic reticulum stress by activating transcription of genes involved in the UPR. Binds DNA on the 5'-CCAC[GA]-3'half of the ER stress response element (ERSE) (5'-CCAAT-N(9)-CCAC[GA]-3') and of ERSE II (5'-ATTGG-N-CCACG-3'). Binding to ERSE requires binding of NF-Y to ERSE. Could also be involved in activation of transcription by the serum response factor. May play a role in foveal development and cone function in the retina. The chain is Cyclic AMP-dependent transcription factor ATF-6 alpha (Atf6) from Mus musculus (Mouse).